The primary structure comprises 370 residues: Aminomethyltransferase (370 aa).

This sequence belongs to the GcvT family. The glycine cleavage system is composed of four proteins: P, T, L and H.

It catalyses the reaction N(6)-[(R)-S(8)-aminomethyldihydrolipoyl]-L-lysyl-[protein] + (6S)-5,6,7,8-tetrahydrofolate = N(6)-[(R)-dihydrolipoyl]-L-lysyl-[protein] + (6R)-5,10-methylene-5,6,7,8-tetrahydrofolate + NH4(+). Functionally, the glycine cleavage system catalyzes the degradation of glycine. In Clostridium botulinum (strain Langeland / NCTC 10281 / Type F), this protein is Aminomethyltransferase.